A 339-amino-acid chain; its full sequence is Coproporphyrin III ferrochelatase (339 aa).

The Fe-coproporphyrin III site is built by Ser52 and Tyr121. Residues His181 and Glu264 each contribute to the Fe(2+) site.

Belongs to the ferrochelatase family.

Its subcellular location is the cytoplasm. The catalysed reaction is Fe-coproporphyrin III + 2 H(+) = coproporphyrin III + Fe(2+). It participates in porphyrin-containing compound metabolism; protoheme biosynthesis. Functionally, involved in coproporphyrin-dependent heme b biosynthesis. Catalyzes the insertion of ferrous iron into coproporphyrin III to form Fe-coproporphyrin III. This chain is Coproporphyrin III ferrochelatase, found in Mycolicibacterium vanbaalenii (strain DSM 7251 / JCM 13017 / BCRC 16820 / KCTC 9966 / NRRL B-24157 / PYR-1) (Mycobacterium vanbaalenii).